A 358-amino-acid polypeptide reads, in one-letter code: Chorismate synthase (358 aa).

An NADP(+)-binding site is contributed by R46. Residues 123–125 (RSS), 235–236 (NA), G275, 290–294 (KPTPS), and R316 each bind FMN.

Belongs to the chorismate synthase family. In terms of assembly, homotetramer. FMNH2 is required as a cofactor.

It carries out the reaction 5-O-(1-carboxyvinyl)-3-phosphoshikimate = chorismate + phosphate. It participates in metabolic intermediate biosynthesis; chorismate biosynthesis; chorismate from D-erythrose 4-phosphate and phosphoenolpyruvate: step 7/7. Its function is as follows. Catalyzes the anti-1,4-elimination of the C-3 phosphate and the C-6 proR hydrogen from 5-enolpyruvylshikimate-3-phosphate (EPSP) to yield chorismate, which is the branch point compound that serves as the starting substrate for the three terminal pathways of aromatic amino acid biosynthesis. This reaction introduces a second double bond into the aromatic ring system. This Sulfurimonas denitrificans (strain ATCC 33889 / DSM 1251) (Thiomicrospira denitrificans (strain ATCC 33889 / DSM 1251)) protein is Chorismate synthase.